The chain runs to 271 residues: 4-hydroxy-tetrahydrodipicolinate reductase (271 aa).

Residue 10-15 (GAAGRM) coordinates NAD(+). NADP(+) is bound at residue arginine 37. Residues 100–102 (GTT) and 124–127 (SGNM) each bind NAD(+). Histidine 157 acts as the Proton donor/acceptor in catalysis. A (S)-2,3,4,5-tetrahydrodipicolinate-binding site is contributed by histidine 158. Catalysis depends on lysine 161, which acts as the Proton donor. 167–168 (GT) contributes to the (S)-2,3,4,5-tetrahydrodipicolinate binding site. The interval 183-202 (SLSEHEQRGRDGHTGPRKDG) is disordered. A compositionally biased stretch (basic and acidic residues) spans 185 to 202 (SEHEQRGRDGHTGPRKDG).

This sequence belongs to the DapB family.

The protein resides in the cytoplasm. It carries out the reaction (S)-2,3,4,5-tetrahydrodipicolinate + NAD(+) + H2O = (2S,4S)-4-hydroxy-2,3,4,5-tetrahydrodipicolinate + NADH + H(+). The enzyme catalyses (S)-2,3,4,5-tetrahydrodipicolinate + NADP(+) + H2O = (2S,4S)-4-hydroxy-2,3,4,5-tetrahydrodipicolinate + NADPH + H(+). The protein operates within amino-acid biosynthesis; L-lysine biosynthesis via DAP pathway; (S)-tetrahydrodipicolinate from L-aspartate: step 4/4. In terms of biological role, catalyzes the conversion of 4-hydroxy-tetrahydrodipicolinate (HTPA) to tetrahydrodipicolinate. This is 4-hydroxy-tetrahydrodipicolinate reductase from Beijerinckia indica subsp. indica (strain ATCC 9039 / DSM 1715 / NCIMB 8712).